We begin with the raw amino-acid sequence, 424 residues long: Adenylosuccinate synthetase 1 (424 aa).

Residues 12-18 and 40-42 contribute to the GTP site; these read GDEGKGK and GHT. Aspartate 13 functions as the Proton acceptor in the catalytic mechanism. Residues aspartate 13 and glycine 40 each coordinate Mg(2+). Residues 13–16, 38–41, threonine 127, arginine 141, threonine 236, and arginine 304 contribute to the IMP site; these read DEGK and NAGH. The active-site Proton donor is the histidine 41. Residue 300-306 participates in substrate binding; the sequence is ARTGRPR. GTP is bound by residues arginine 306, 332–334, and 413–415; these read KLD and GVG.

The protein belongs to the adenylosuccinate synthetase family. In terms of assembly, homodimer. The cofactor is Mg(2+).

It localises to the cytoplasm. The catalysed reaction is IMP + L-aspartate + GTP = N(6)-(1,2-dicarboxyethyl)-AMP + GDP + phosphate + 2 H(+). It participates in purine metabolism; AMP biosynthesis via de novo pathway; AMP from IMP: step 1/2. Functionally, plays an important role in the de novo pathway of purine nucleotide biosynthesis. Catalyzes the first committed step in the biosynthesis of AMP from IMP. This is Adenylosuccinate synthetase 1 from Methanosarcina acetivorans (strain ATCC 35395 / DSM 2834 / JCM 12185 / C2A).